The primary structure comprises 804 residues: Protein-lysine N-methyltransferase SMYD4 (804 aa).

112-114 serves as a coordination point for S-adenosyl-L-methionine; sequence RSA. In terms of domain architecture, SET spans 233 to 574; that stretch reads SSVGLCIDPL…KGQEILHCYG (342 aa). Positions 296, 299, 309, 312, 318, 322, 331, and 335 each coordinate Zn(2+). The MYND-type zinc finger occupies 296 to 335; that stretch reads CHRCLKHTLATVPCDGCSYAKYCSQECLQQAWELYHRTEC. S-adenosyl-L-methionine contacts are provided by residues N427, 539-540, Y573, and F595; that span reads NH.

This sequence belongs to the class V-like SAM-binding methyltransferase superfamily. As to quaternary structure, interacts (via MYND-type zinc finger) with HDAC1.

It is found in the nucleus. The protein localises to the cytoplasm. It carries out the reaction L-lysyl-[protein] + S-adenosyl-L-methionine = N(6)-methyl-L-lysyl-[protein] + S-adenosyl-L-homocysteine + H(+). Functionally, protein-lysine N-methyltransferase. Monomethylates PRMT5, modulating its transcriptional activity. May also act as a histone methyltransferase. Plays a critical role in cardiac development. Acts as a key epigenetic regulator of gene expression during cardiac development via its dual activities as a methyltransferase and negative regulator of HDAC1. The sequence is that of Protein-lysine N-methyltransferase SMYD4 (SMYD4) from Pongo abelii (Sumatran orangutan).